Reading from the N-terminus, the 164-residue chain is ATP synthase subunit b (164 aa).

A helical transmembrane segment spans residues 6–26 (GELVGNFILVTGSVIVLLLLI).

It belongs to the ATPase B chain family. As to quaternary structure, F-type ATPases have 2 components, F(1) - the catalytic core - and F(0) - the membrane proton channel. F(1) has five subunits: alpha(3), beta(3), gamma(1), delta(1), epsilon(1). F(0) has three main subunits: a(1), b(2) and c(10-14). The alpha and beta chains form an alternating ring which encloses part of the gamma chain. F(1) is attached to F(0) by a central stalk formed by the gamma and epsilon chains, while a peripheral stalk is formed by the delta and b chains.

Its subcellular location is the cell membrane. Its function is as follows. F(1)F(0) ATP synthase produces ATP from ADP in the presence of a proton or sodium gradient. F-type ATPases consist of two structural domains, F(1) containing the extramembraneous catalytic core and F(0) containing the membrane proton channel, linked together by a central stalk and a peripheral stalk. During catalysis, ATP synthesis in the catalytic domain of F(1) is coupled via a rotary mechanism of the central stalk subunits to proton translocation. Functionally, component of the F(0) channel, it forms part of the peripheral stalk, linking F(1) to F(0). The polypeptide is ATP synthase subunit b (Streptococcus pyogenes serotype M6 (strain ATCC BAA-946 / MGAS10394)).